Reading from the N-terminus, the 361-residue chain is MSKRAFNFCAGPAALPDAVLQRAQAELLDWRGKGLSVMEMSHRSDDYVAIASKAEQDLRDLLDIPSDYKVLFLQGGASQQFAEIPLNLLPEDGVADYIDTGIWSKKAIEEARRYGTVNVAASAKEYDYFAIPGQNEWTLTKDAAYVHYASNETIGGLEFDWIPETGDVPLVTDMSSDILSRPLDVSRFGLIYAGAQKNIGPSGLVVVIVREDLLGRARSVCPTMLNYKIAADNGSMYNTPATYSWYLSGLVFEWLKEQGGVTAMEQRNRAKKDLLYKTIDASDFYTNPIQPSARSWMNVPFRLADERLDKPFLEGAEARGLLNLKGHRSVGGMRASIYNALGLDAVEALVAYMAEFEKEHG.

R43 is a binding site for L-glutamate. Pyridoxal 5'-phosphate is bound by residues 77–78 (AS), W103, T153, D173, and Q196. Position 197 is an N6-(pyridoxal phosphate)lysine (K197). 238-239 (NT) serves as a coordination point for pyridoxal 5'-phosphate.

This sequence belongs to the class-V pyridoxal-phosphate-dependent aminotransferase family. SerC subfamily. Homodimer. Pyridoxal 5'-phosphate serves as cofactor.

It is found in the cytoplasm. The enzyme catalyses O-phospho-L-serine + 2-oxoglutarate = 3-phosphooxypyruvate + L-glutamate. It carries out the reaction 4-(phosphooxy)-L-threonine + 2-oxoglutarate = (R)-3-hydroxy-2-oxo-4-phosphooxybutanoate + L-glutamate. The protein operates within amino-acid biosynthesis; L-serine biosynthesis; L-serine from 3-phospho-D-glycerate: step 2/3. It participates in cofactor biosynthesis; pyridoxine 5'-phosphate biosynthesis; pyridoxine 5'-phosphate from D-erythrose 4-phosphate: step 3/5. In terms of biological role, catalyzes the reversible conversion of 3-phosphohydroxypyruvate to phosphoserine and of 3-hydroxy-2-oxo-4-phosphonooxybutanoate to phosphohydroxythreonine. The polypeptide is Phosphoserine aminotransferase (Pseudomonas aeruginosa (strain LESB58)).